A 113-amino-acid polypeptide reads, in one-letter code: Iron-sulfur cluster insertion protein ErpA (113 aa).

Residues cysteine 41, cysteine 105, and cysteine 107 each coordinate iron-sulfur cluster.

The protein belongs to the HesB/IscA family. Homodimer. Requires iron-sulfur cluster as cofactor.

Required for insertion of 4Fe-4S clusters for at least IspG. This is Iron-sulfur cluster insertion protein ErpA from Aliivibrio salmonicida (strain LFI1238) (Vibrio salmonicida (strain LFI1238)).